Here is a 214-residue protein sequence, read N- to C-terminus: uncharacterized protein (214 aa).

The next 5 helical transmembrane spans lie at 33–53, 104–124, 132–152, 153–173, and 186–206; these read VILF…ILVV, ILGI…SYVL, FIYL…LSAS, GGVL…FGTK, and LLIL…TITF.

The protein localises to the cell membrane. This is an uncharacterized protein from Methanocaldococcus jannaschii (strain ATCC 43067 / DSM 2661 / JAL-1 / JCM 10045 / NBRC 100440) (Methanococcus jannaschii).